A 468-amino-acid chain; its full sequence is Anthocyanidin 3-O-glucoside 2'''-O-xylosyltransferase (468 aa).

UDP-alpha-D-xylose-binding positions include Ser-284, 344 to 346 (IQQ), 361 to 369 (HCGFGSMWE), and 383 to 386 (HGEQ).

The protein belongs to the UDP-glycosyltransferase family.

The catalysed reaction is an anthocyanidin 3-O-beta-D-glucoside + UDP-alpha-D-xylose = an anthocyanidin 3-O-beta-D-sambubioside + UDP + 2 H(+). It functions in the pathway secondary metabolite biosynthesis; flavonoid biosynthesis. Functionally, contributes to the last few anthocyanin biosynthetic steps. Converts cyanidin 3-O-glucoside to cyanidin 3-O-xylosyl(1-&gt;2)glucoside. Can use 3-O-glucosylated anthocyanidins/flavonols and uridine diphosphate (UDP)-xylose as substrates. This is Anthocyanidin 3-O-glucoside 2'''-O-xylosyltransferase (A3G2XYLT) from Arabidopsis thaliana (Mouse-ear cress).